We begin with the raw amino-acid sequence, 550 residues long: Dihydroxy-acid dehydratase (550 aa).

Asp-78 serves as a coordination point for Mg(2+). Cys-119 is a [2Fe-2S] cluster binding site. Asp-120 and Lys-121 together coordinate Mg(2+). The residue at position 121 (Lys-121) is an N6-carboxylysine. Cys-192 lines the [2Fe-2S] cluster pocket. Residue Glu-440 coordinates Mg(2+). The Proton acceptor role is filled by Ser-466.

It belongs to the IlvD/Edd family. As to quaternary structure, homodimer. The cofactor is [2Fe-2S] cluster. It depends on Mg(2+) as a cofactor.

The enzyme catalyses (2R)-2,3-dihydroxy-3-methylbutanoate = 3-methyl-2-oxobutanoate + H2O. The catalysed reaction is (2R,3R)-2,3-dihydroxy-3-methylpentanoate = (S)-3-methyl-2-oxopentanoate + H2O. It participates in amino-acid biosynthesis; L-isoleucine biosynthesis; L-isoleucine from 2-oxobutanoate: step 3/4. The protein operates within amino-acid biosynthesis; L-valine biosynthesis; L-valine from pyruvate: step 3/4. In terms of biological role, functions in the biosynthesis of branched-chain amino acids. Catalyzes the dehydration of (2R,3R)-2,3-dihydroxy-3-methylpentanoate (2,3-dihydroxy-3-methylvalerate) into 2-oxo-3-methylpentanoate (2-oxo-3-methylvalerate) and of (2R)-2,3-dihydroxy-3-methylbutanoate (2,3-dihydroxyisovalerate) into 2-oxo-3-methylbutanoate (2-oxoisovalerate), the penultimate precursor to L-isoleucine and L-valine, respectively. The chain is Dihydroxy-acid dehydratase from Thermodesulfovibrio yellowstonii (strain ATCC 51303 / DSM 11347 / YP87).